The primary structure comprises 188 residues: Peptidyl-tRNA hydrolase (188 aa).

TRNA is bound at residue tyrosine 15. Residue histidine 20 is the Proton acceptor of the active site. Positions 66, 68, and 114 each coordinate tRNA.

Belongs to the PTH family. As to quaternary structure, monomer.

Its subcellular location is the cytoplasm. It carries out the reaction an N-acyl-L-alpha-aminoacyl-tRNA + H2O = an N-acyl-L-amino acid + a tRNA + H(+). Functionally, hydrolyzes ribosome-free peptidyl-tRNAs (with 1 or more amino acids incorporated), which drop off the ribosome during protein synthesis, or as a result of ribosome stalling. Its function is as follows. Catalyzes the release of premature peptidyl moieties from peptidyl-tRNA molecules trapped in stalled 50S ribosomal subunits, and thus maintains levels of free tRNAs and 50S ribosomes. The chain is Peptidyl-tRNA hydrolase from Lactococcus lactis subsp. lactis (strain IL1403) (Streptococcus lactis).